A 196-amino-acid chain; its full sequence is ATP-dependent Clp protease proteolytic subunit (196 aa).

Ser101 acts as the Nucleophile in catalysis. His126 is a catalytic residue.

The protein belongs to the peptidase S14 family. As to quaternary structure, component of the chloroplastic Clp protease core complex.

It localises to the plastid. The protein localises to the chloroplast stroma. The enzyme catalyses Hydrolysis of proteins to small peptides in the presence of ATP and magnesium. alpha-casein is the usual test substrate. In the absence of ATP, only oligopeptides shorter than five residues are hydrolyzed (such as succinyl-Leu-Tyr-|-NHMec, and Leu-Tyr-Leu-|-Tyr-Trp, in which cleavage of the -Tyr-|-Leu- and -Tyr-|-Trp bonds also occurs).. Functionally, cleaves peptides in various proteins in a process that requires ATP hydrolysis. Has a chymotrypsin-like activity. Plays a major role in the degradation of misfolded proteins. The protein is ATP-dependent Clp protease proteolytic subunit of Nicotiana tabacum (Common tobacco).